The sequence spans 353 residues: uncharacterized protein (353 aa).

An N-terminal signal peptide occupies residues 1–23 (MSAGKGLLLVICLLFLPLKSAMA).

To E.coli YqiI.

Its function is as follows. May be involved in a fimbrial system chaperoned by YbgP and exported by YbgQ. This is an uncharacterized protein from Escherichia coli (strain K12).